Reading from the N-terminus, the 557-residue chain is E3 ubiquitin-protein ligase ARIH1 (557 aa).

The span at 1-47 (MDSDEGYNYEFDEDEECSEEDSGAEEEEDEDDDEPDDDTLDLGEVEL) shows a compositional bias: acidic residues. The tract at residues 1–95 (MDSDEGYNYE…GGGGGPGHEQ (95 aa)) is disordered. Residues 65 to 92 (ETGGGGGSALGPGGGGGGGGGGGGGGPG) are compositionally biased toward gly residues. The interval 105–153 (TAEQILQHMVECIREVNEVIQNPATITRILLSHFNWDKEKLMERYFDGN) is UBA-like. Lysine 142 is subject to N6-acetyllysine. A TRIAD supradomain region spans residues 182 to 393 (QDMPCQICYL…SAWYNCNRYN (212 aa)). Zn(2+)-binding residues include cysteine 186, cysteine 189, cysteine 203, histidine 205, cysteine 208, cysteine 211, cysteine 231, cysteine 236, cysteine 276, cysteine 281, cysteine 297, cysteine 299, cysteine 304, cysteine 307, histidine 312, cysteine 317, cysteine 344, and cysteine 347. The RING-type 1 zinc-finger motif lies at 186 to 236 (CQICYLNYPNSYFTGLECGHKFCMQCWSEYLTTKIMEEGMGQTISCPAHGC). Residues 256 to 317 (LKYQHLITNS…GENWHDPVKC (62 aa)) form an IBR-type zinc finger. An RING-type 2; atypical zinc finger spans residues 344–375 (CPKCHVTIEKDGGCNHMVCRNQNCKAEFCWVC). Residue cysteine 357 is part of the active site. Residues cysteine 362, cysteine 367, cysteine 372, cysteine 375, histidine 382, and cysteine 389 each contribute to the Zn(2+) site. The segment at 408–557 (RAALQRYLFY…EKDLWEYIED (150 aa)) is ariadne domain.

This sequence belongs to the RBR family. Ariadne subfamily. Interacts (via the first RING-type zinc finger) with UBE2L3. Associates with cullin-RING ubiquitin ligase (CRL) complexes containing CUL1, CUL2 and CUL3. Interacts with neddylated CUL1. Interacts with neddylated CUL2. Interacts with neddylated CUL3. Interacts with neddylated CUL4A. In terms of tissue distribution, widely expressed.

The protein localises to the cytoplasm. Its subcellular location is the nucleus. The protein resides in the cajal body. It carries out the reaction [E2 ubiquitin-conjugating enzyme]-S-ubiquitinyl-L-cysteine + [acceptor protein]-L-lysine = [E2 ubiquitin-conjugating enzyme]-L-cysteine + [acceptor protein]-N(6)-ubiquitinyl-L-lysine.. Its pathway is protein modification; protein ubiquitination. Its activity is regulated as follows. Autoinhibited by the ariadne domain, which masks the second RING-type zinc finger that contains the active site and inhibits the E3 activity. Inhibition is relieved upon binding to neddylated cullin-RING ubiquitin ligase complexes, which activate the E3 ligase activity of ARIH1. In terms of biological role, E3 ubiquitin-protein ligase, which catalyzes ubiquitination of target proteins together with ubiquitin-conjugating enzyme E2 UBE2L3. Acts as an atypical E3 ubiquitin-protein ligase by working together with cullin-RING ubiquitin ligase (CRL) complexes and initiating ubiquitination of CRL substrates: associates with CRL complexes and specifically mediates addition of the first ubiquitin on CRLs targets. The initial ubiquitin is then elongated by CDC34/UBE2R1 and UBE2R2. E3 ubiquitin-protein ligase activity is activated upon binding to neddylated cullin-RING ubiquitin ligase complexes. Plays a role in protein translation in response to DNA damage by mediating ubiquitination of EIF4E2, the consequences of EIF4E2 ubiquitination are however unclear. According to a report, EIF4E2 ubiquitination leads to promote EIF4E2 cap-binding and protein translation arrest. According to another report EIF4E2 ubiquitination leads to its subsequent degradation. Acts as the ligase involved in ISGylation of EIF4E2. In vitro, controls the degradation of the LINC (LInker of Nucleoskeleton and Cytoskeleton) complex member SUN2 and may therefore have a role in the formation and localization of the LINC complex, and as a consequence, nuclear subcellular localization and nuclear morphology. The protein is E3 ubiquitin-protein ligase ARIH1 of Homo sapiens (Human).